A 258-amino-acid chain; its full sequence is Snake venom serine protease HS114 (258 aa).

Residues 1–18 (MVLVRVVANLLILQLSYA) form the signal peptide. Positions 19–24 (QKVSEL) are excised as a propeptide. The region spanning 25–249 (VVGGDECNIN…YNTWIESVIA (225 aa)) is the Peptidase S1 domain. 6 disulfides stabilise this stretch: C31–C163, C50–C66, C98–C256, C142–C210, C174–C189, and C200–C225. N44 is a glycosylation site (N-linked (GlcNAc...) asparagine). Residues H65 and D110 each act as charge relay system in the active site. Residue S204 is the Charge relay system of the active site.

This sequence belongs to the peptidase S1 family. Snake venom subfamily. In terms of assembly, monomer. N-glycosylated. Contains approximately 10% carbohydrates. In terms of tissue distribution, expressed by the venom gland.

It localises to the secreted. With respect to regulation, inhibited by benzamidine, PMSF, leupeptin, SDS and DTT, but not by EDTA, and commercial antivenom. Its function is as follows. Snake venom serine protease that shows non-specific action on fibrinogen. It preferentially degrades fibrinogen Aalpha (FGA), releasing fibrinopeptide A, and shows a lower activity on fibrinogen Bbeta (FGB), releasing fibrinopeptide B and other uncommon fibrinopeptides. Also shows low fibrinolytic activity compared to plasmin. Has high enzymatic activity on the substrates for activated protein C and factor XIa, and for thrombin. Shows a wide activity spectrum at different peptide sequences, with a preferential cleavage at Lys-|-Xaa over Arg-|-Xaa bonds. The chain is Snake venom serine protease HS114 from Bothrops jararaca (Jararaca).